Reading from the N-terminus, the 283-residue chain is MMDQTVSNNFKMIYIASCGEGINAFHLVESTLVQFPDSDITVVKVPHIRTESQVDHLLDRVKDVESLIAHTIVEPNLRQYLVTKAEEHKIVTIDLMGQVLNKIETFLSIRPLGKPGLYRETHQVDLKQVTAIDFALAHDDGLRPESLDEAEIILVGLSRAGKTPLSMYMGVMGWKVANIPYVPGVPMPQTLDEVDRRRVIALNINIEQLLSHRKMRQESLGTSDMHAYSRRQEVEVEVQTAQKYYITKGFSMIDVSNKPIETSAEEIAEMITRRFKAQAHLKD.

An ADP-binding site is contributed by 156 to 163; it reads GLSRAGKT.

Belongs to the pyruvate, phosphate/water dikinase regulatory protein family. PDRP subfamily.

The enzyme catalyses N(tele)-phospho-L-histidyl/L-threonyl-[pyruvate, phosphate dikinase] + ADP = N(tele)-phospho-L-histidyl/O-phospho-L-threonyl-[pyruvate, phosphate dikinase] + AMP + H(+). It catalyses the reaction N(tele)-phospho-L-histidyl/O-phospho-L-threonyl-[pyruvate, phosphate dikinase] + phosphate + H(+) = N(tele)-phospho-L-histidyl/L-threonyl-[pyruvate, phosphate dikinase] + diphosphate. In terms of biological role, bifunctional serine/threonine kinase and phosphorylase involved in the regulation of the pyruvate, phosphate dikinase (PPDK) by catalyzing its phosphorylation/dephosphorylation. This Desulfotalea psychrophila (strain LSv54 / DSM 12343) protein is Putative pyruvate, phosphate dikinase regulatory protein.